A 75-amino-acid polypeptide reads, in one-letter code: DNA-directed RNA polymerase subunit Rpo5 (75 aa).

It belongs to the archaeal Rpo5/eukaryotic RPB5 RNA polymerase subunit family. In terms of assembly, part of the RNA polymerase complex.

The protein resides in the cytoplasm. It carries out the reaction RNA(n) + a ribonucleoside 5'-triphosphate = RNA(n+1) + diphosphate. In terms of biological role, DNA-dependent RNA polymerase (RNAP) catalyzes the transcription of DNA into RNA using the four ribonucleoside triphosphates as substrates. The protein is DNA-directed RNA polymerase subunit Rpo5 of Pyrobaculum aerophilum (strain ATCC 51768 / DSM 7523 / JCM 9630 / CIP 104966 / NBRC 100827 / IM2).